The chain runs to 353 residues: Photosystem II protein D1 (353 aa).

T2 carries the post-translational modification N-acetylthreonine. Residue T2 is modified to Phosphothreonine. Transmembrane regions (helical) follow at residues 29–46 (YIGW…TATS), 118–133 (HFLL…EWEL), and 142–156 (WIAV…AATA). H118 contributes to the chlorophyll a binding site. Y126 is a pheophytin a binding site. Positions 170 and 189 each coordinate [CaMn4O5] cluster. The chain crosses the membrane as a helical span at residues 197–218 (FHMLGVAGVFGGSLFSAMHGSL). Residue H198 participates in chlorophyll a binding. A quinone contacts are provided by residues H215 and 264-265 (SF). Position 215 (H215) interacts with Fe cation. Residue H272 participates in Fe cation binding. Residues 274-288 (FLAAWPVVGIWFTAL) form a helical membrane-spanning segment. [CaMn4O5] cluster-binding residues include H332, E333, D342, and A344. A propeptide spanning residues 345–353 (AVEVPAING) is cleaved from the precursor.

The protein belongs to the reaction center PufL/M/PsbA/D family. PSII is composed of 1 copy each of membrane proteins PsbA, PsbB, PsbC, PsbD, PsbE, PsbF, PsbH, PsbI, PsbJ, PsbK, PsbL, PsbM, PsbT, PsbX, PsbY, PsbZ, Psb30/Ycf12, at least 3 peripheral proteins of the oxygen-evolving complex and a large number of cofactors. It forms dimeric complexes. The D1/D2 heterodimer binds P680, chlorophylls that are the primary electron donor of PSII, and subsequent electron acceptors. It shares a non-heme iron and each subunit binds pheophytin, quinone, additional chlorophylls, carotenoids and lipids. D1 provides most of the ligands for the Mn4-Ca-O5 cluster of the oxygen-evolving complex (OEC). There is also a Cl(-1) ion associated with D1 and D2, which is required for oxygen evolution. The PSII complex binds additional chlorophylls, carotenoids and specific lipids. is required as a cofactor. In terms of processing, tyr-161 forms a radical intermediate that is referred to as redox-active TyrZ, YZ or Y-Z. Post-translationally, C-terminally processed by CTPA; processing is essential to allow assembly of the oxygen-evolving complex and thus photosynthetic growth.

Its subcellular location is the plastid. The protein resides in the chloroplast thylakoid membrane. It carries out the reaction 2 a plastoquinone + 4 hnu + 2 H2O = 2 a plastoquinol + O2. Its function is as follows. Photosystem II (PSII) is a light-driven water:plastoquinone oxidoreductase that uses light energy to abstract electrons from H(2)O, generating O(2) and a proton gradient subsequently used for ATP formation. It consists of a core antenna complex that captures photons, and an electron transfer chain that converts photonic excitation into a charge separation. The D1/D2 (PsbA/PsbD) reaction center heterodimer binds P680, the primary electron donor of PSII as well as several subsequent electron acceptors. The chain is Photosystem II protein D1 from Hordeum vulgare (Barley).